The primary structure comprises 72 residues: Translation initiation factor IF-1 (72 aa).

The 72-residue stretch at 1-72 folds into the S1-like domain; sequence MAKDDVIEVE…TRGRITYRYK (72 aa). A Phosphotyrosine modification is found at Tyr-60.

Belongs to the IF-1 family. In terms of assembly, component of the 30S ribosomal translation pre-initiation complex which assembles on the 30S ribosome in the order IF-2 and IF-3, IF-1 and N-formylmethionyl-tRNA(fMet); mRNA recruitment can occur at any time during PIC assembly.

The protein resides in the cytoplasm. Functionally, one of the essential components for the initiation of protein synthesis. Stabilizes the binding of IF-2 and IF-3 on the 30S subunit to which N-formylmethionyl-tRNA(fMet) subsequently binds. Helps modulate mRNA selection, yielding the 30S pre-initiation complex (PIC). Upon addition of the 50S ribosomal subunit IF-1, IF-2 and IF-3 are released leaving the mature 70S translation initiation complex. This is Translation initiation factor IF-1 from Geobacillus thermodenitrificans (strain NG80-2).